The following is a 247-amino-acid chain: Uridylate kinase (247 aa).

18–21 (KLSG) provides a ligand contact to ATP. UMP is bound at residue glycine 60. ATP is bound by residues glycine 61 and arginine 65. UMP contacts are provided by residues aspartate 80 and 141 to 148 (TGNPFFTT). ATP-binding residues include threonine 168, tyrosine 174, and aspartate 177.

The protein belongs to the UMP kinase family. As to quaternary structure, homohexamer.

The protein resides in the cytoplasm. It catalyses the reaction UMP + ATP = UDP + ADP. The protein operates within pyrimidine metabolism; CTP biosynthesis via de novo pathway; UDP from UMP (UMPK route): step 1/1. Its activity is regulated as follows. Inhibited by UTP. Functionally, catalyzes the reversible phosphorylation of UMP to UDP. The chain is Uridylate kinase from Pseudomonas fluorescens (strain ATCC BAA-477 / NRRL B-23932 / Pf-5).